An 848-amino-acid polypeptide reads, in one-letter code: DIS3-like exonuclease 2 (848 aa).

Positions 153–173 (KGDRNSGKTDNNSPNKTEKRC) are disordered. Residues D345 and D354 each contribute to the Mg(2+) site.

This sequence belongs to the RNR ribonuclease family. DIS3L2 subfamily. Mg(2+) serves as cofactor. Mn(2+) is required as a cofactor. Cleaved by caspase ced-3 in vitro.

It is found in the cytoplasm. Its subcellular location is the P-body. Functionally, 3'-5'-exoribonuclease that specifically recognizes RNAs polyuridylated at their 3' end and mediates their degradation. Component of an exosome-independent RNA degradation pathway that mediates degradation of cytoplasmic mRNAs that have been deadenylated and subsequently uridylated at their 3'. This Caenorhabditis elegans protein is DIS3-like exonuclease 2.